A 372-amino-acid polypeptide reads, in one-letter code: Delta-type opioid receptor (372 aa).

Residues Met1–Ala47 are Extracellular-facing. Asn18 and Asn33 each carry an N-linked (GlcNAc...) asparagine glycan. Residues Leu48 to Val75 form a helical membrane-spanning segment. Residues Arg76–Asn85 lie on the Cytoplasmic side of the membrane. The helical transmembrane segment at Ile86–Leu110 threads the bilayer. Over Met111–Lys122 the chain is Extracellular. Cysteines 121 and 198 form a disulfide. The helical transmembrane segment at Ala123–Val144 threads the bilayer. Topologically, residues Asp145–Ala163 are cytoplasmic. A helical transmembrane segment spans residues Lys164 to Met186. Residues Ala187–Ser206 lie on the Extracellular side of the membrane. Residues Trp207–Leu238 traverse the membrane as a helical segment. Residues Arg239 to Arg261 lie on the Cytoplasmic side of the membrane. The chain crosses the membrane as a helical span at residues Met262–Trp284. At Thr285–Ala299 the chain is on the extracellular side. The helical transmembrane segment at Leu300–Leu321 threads the bilayer. Topologically, residues Asp322 to Ala372 are cytoplasmic. A lipid anchor (S-palmitoyl cysteine) is attached at Cys333. The disordered stretch occupies residues Gln340 to Ala372.

The protein belongs to the G-protein coupled receptor 1 family. May form homooligomers. Forms a heterodimer with OPRM1. Interacts with GPRASP1. Interacts with RTP4; the interaction promotes cell surface localization of the OPRD1-OPRM1 heterodimer. Post-translationally, ubiquitinated. A basal ubiquitination seems not to be related to degradation. Ubiquitination is increased upon formation of OPRM1:OPRD1 oligomers leading to proteasomal degradation; the ubiquitination is diminished by RTP4. Brain, with high concentrations in the basal ganglia and limbic regions.

Its subcellular location is the cell membrane. Its function is as follows. G-protein coupled receptor that functions as a receptor for endogenous enkephalins and for a subset of other opioids. Ligand binding causes a conformation change that triggers signaling via guanine nucleotide-binding proteins (G proteins) and modulates the activity of down-stream effectors, such as adenylate cyclase. Signaling leads to the inhibition of adenylate cyclase activity. Inhibits neurotransmitter release by reducing calcium ion currents and increasing potassium ion conductance. Plays a role in the perception of pain and in opiate-mediated analgesia. Plays a role in developing analgesic tolerance to morphine. The protein is Delta-type opioid receptor (Oprd1) of Mus musculus (Mouse).